A 239-amino-acid chain; its full sequence is Ribosomal RNA small subunit methyltransferase G (239 aa).

Residues G77, F82, 128 to 129 (AE), and R147 contribute to the S-adenosyl-L-methionine site.

It belongs to the methyltransferase superfamily. RNA methyltransferase RsmG family.

The protein resides in the cytoplasm. Specifically methylates the N7 position of guanine in position 535 of 16S rRNA. This Bacillus cereus (strain G9842) protein is Ribosomal RNA small subunit methyltransferase G.